Reading from the N-terminus, the 66-residue chain is Large ribosomal subunit protein bL35 (66 aa).

A disordered region spans residues 1 to 26 (MPKQKTHRGAAKRFKKTGSGKLKRSH).

This sequence belongs to the bacterial ribosomal protein bL35 family.

The chain is Large ribosomal subunit protein bL35 from Bacillus anthracis.